Consider the following 101-residue polypeptide: DNA-directed RNA polymerase subunit beta (101 aa).

A disordered region spans residues 74–101 (KRRLSALGPGGLSRERAGLEVRDVHSSH). Over residues 86 to 101 (SRERAGLEVRDVHSSH) the composition is skewed to basic and acidic residues.

This sequence belongs to the RNA polymerase beta chain family. As to quaternary structure, the RNAP catalytic core consists of 2 alpha, 1 beta, 1 beta' and 1 omega subunit. When a sigma factor is associated with the core the holoenzyme is formed, which can initiate transcription.

The enzyme catalyses RNA(n) + a ribonucleoside 5'-triphosphate = RNA(n+1) + diphosphate. DNA-dependent RNA polymerase catalyzes the transcription of DNA into RNA using the four ribonucleoside triphosphates as substrates. The protein is DNA-directed RNA polymerase subunit beta (rpoB) of Mycolicibacterium peregrinum (Mycobacterium peregrinum).